An 835-amino-acid chain; its full sequence is MKVLALRHSVAQVYADTQIYLHDDSKDEYENAFLISNLTTHNILYLNYSLKTLKILNKSGIAAVEVQSPDELFALIRCNFTYDYENNIIYLHDYSYYTNNEIRTDQHWITKTDIIDYLLPGWKLTYVGYNGKNTRGHYNFSFSCQNAATDDDIIIEYIYSNELDFQNFLLRKIKERMTTSLPIARLSNRVFRDKLFPSIVNIYKKVINVGPRNESMFTFLNFPTIKQFSNGAYIVKHTIKLKQEKWLGKRVSQFDIGQYKNMLNVVTTIYYYYNLYHSKPIIYMLGSAPSHWIHDIKQYSDFTFETWDPLDTPYSTIHHKELFFYKDVNKLKDNSILYIDIRTDRKNMDWKEWRKVVEQQTVNNLNIAYKYLSTGKAKVCCVKLTAMDLELPITAKLLHHPTTEVRSEFYAILDVWDIITIKRFIPKGVFYAFINNITTENVFIQPPFKLKASPTDYIVALYALSNDFNSRQDVINLINKQKQSLITVRMNNTFKDEPKVNFKNIYDWTFLPTDFELKDSIITSYDGCLGMFGLSISLSSKPTGNNHLFIINGNDKYYKLDQYANHMGISRRSHQIRFSESATSYSGYIFRDLSNNNFNLIGTNVENSVSGHVYNALIYYRYNYAFDLKRWIYLHSIGKVAIEGGRYYEHAPIELIYACRSAREFAILQDDLTVLRYADEIEGYINKVYSITYADDPNYFIGIKFNSIPYEYDVKVPHLTLGVLFISDNMIHNVVTVLKKMKTELFKTEISTSYTYMLSDNIYVANASGVLSTYFKLYNMFYRNHITFGQSRMFIPHITLSFSTKQTVRIESTRLKINSIYLRKIKGETVFDMSE.

Positions 171–245 are N7-methyltransferase activity; the sequence is RKIKERMTTS…KHTIKLKQEK (75 aa). The 2'-O-methyltransferase activity stretch occupies residues 246–428; the sequence is WLGKRVSQFD…ITIKRFIPKG (183 aa). The segment at 429–555 is N7-methyltransferase activity; it reads VFYAFINNIT…NHLFIINGND (127 aa). The GTase/RTPase activity stretch occupies residues 556–692; the sequence is KYYKLDQYAN…GYINKVYSIT (137 aa). The 2'-5'-phosphodiesterase activity stretch occupies residues 693 to 835; it reads YADDPNYFIG…KGETVFDMSE (143 aa). Active-site for 2'-5'-phosphodiesterase activity residues include H718, T720, H797, and T799.

Belongs to the rotavirus VP3 family. As to quaternary structure, interacts with VP1. Interacts with VP2.

Its subcellular location is the virion. It carries out the reaction a 5'-end diphospho-ribonucleoside in mRNA + GTP + H(+) = a 5'-end (5'-triphosphoguanosine)-ribonucleoside in mRNA + diphosphate. It catalyses the reaction a 5'-end (5'-triphosphoguanosine)-ribonucleoside in mRNA + S-adenosyl-L-methionine = a 5'-end (N(7)-methyl 5'-triphosphoguanosine)-ribonucleoside in mRNA + S-adenosyl-L-homocysteine. The catalysed reaction is 5'-triphosphoadenylyl-(2'-&gt;5')-adenylyl-(2'-&gt;5')-adenosine + 2 H2O = 2 AMP + ATP + 2 H(+). In terms of biological role, multifunctional enzyme involved in mRNA capping. Catalyzes the formation of the 5' cap structure on the viral plus-strand transcripts. Specifically binds to GTP and displays guanylyltransferase and methyltransferase activities. Has affinity for ssRNA but not for dsRNA. Capping activity is non-specific and caps RNAs that initiate with either a G or an A residue. Together with VP1 polymerase, forms a VP1-VP3 complex positioned near the channels situated at each of the five-fold vertices of the core. Following infection, the outermost layer of the virus is lost, leaving a double-layered particle (DLP) made up of the core and VP6 shell. VP1 then catalyzes the transcription of fully conservative plus-strand genomic RNAs that are capped by VP3 and extruded through the DLP's channels into the cytoplasm where they function as mRNAs for translation of viral proteins. DLPs probably have an RNA triphosphatase activity as well, whereas open cores do not. Its function is as follows. Counteracts the host innate immune response thanks to its phosphodiesterase that degrades the 5'-triphosphorylated, 2'-5' linked adenylate oligomers produced by the host cell IFN-inducible 2',5'-oligoadenylate synthetase (OAS). The host RNaseL is therefore not activated. This chain is Protein VP3, found in Rotavirus A (strain RVA/Human/United Kingdom/ST3/1975/G4P2A[6]) (RV-A).